We begin with the raw amino-acid sequence, 134 residues long: Putative nickel-responsive regulator (134 aa).

Residues histidine 78, histidine 89, histidine 91, and cysteine 97 each coordinate Ni(2+).

It belongs to the transcriptional regulatory CopG/NikR family. Ni(2+) serves as cofactor.

In terms of biological role, transcriptional regulator. This is Putative nickel-responsive regulator from Chlorobaculum parvum (strain DSM 263 / NCIMB 8327) (Chlorobium vibrioforme subsp. thiosulfatophilum).